We begin with the raw amino-acid sequence, 132 residues long: Small ribosomal subunit protein uS8 (132 aa).

It belongs to the universal ribosomal protein uS8 family. As to quaternary structure, part of the 30S ribosomal subunit. Contacts proteins S5 and S12.

Functionally, one of the primary rRNA binding proteins, it binds directly to 16S rRNA central domain where it helps coordinate assembly of the platform of the 30S subunit. In Psychrobacter arcticus (strain DSM 17307 / VKM B-2377 / 273-4), this protein is Small ribosomal subunit protein uS8.